A 266-amino-acid polypeptide reads, in one-letter code: Integral membrane protein 2B (266 aa).

Over 1 to 54 (MVKVTFNSALAQKEAKKDEPKSSEEALIVPPDAVAVDCKDPGDVVPVGQRRAWC) the chain is Cytoplasmic. Residues 55 to 75 (WCMCFGLAFMLAGVILGGAYL) traverse the membrane as a helical; Signal-anchor for type II membrane protein segment. The Lumenal segment spans residues 76–266 (YKYFALQPDD…KFAVETLICS (191 aa)). Residues 102–134 (EPSADAPAARYQTIEENIKIFEEDAVEFISVPV) form a necessary for interaction with APP and inhibitor effects on APP processing region. One can recognise a BRICHOS domain in the interval 137 to 231 (FADSDPANIV…LCHDKETYKL (95 aa)). Cystine bridges form between Cys-164–Cys-223 and Cys-248–Cys-265. Asn-170 carries N-linked (GlcNAc...) asparagine glycosylation.

This sequence belongs to the ITM2 family. Homodimer; disulfide-linked. Interacts with SPPL2A and SPPL2B. Interacts with APP. Mature BRI2 (mBRI2) interacts with the APP amyloid-beta A4 protein; the interaction occurs at the cell surface and in the endocytic compartments and enable alpha- and beta-secretase-induced APP cleavage inhibition. Mature BRI2 (mBRI2) interacts with the APP C99; the interaction occurs in the endocytic compartments and enable gamma-secretase-induced C99 cleavage inhibition. May form heterodimers with Bri23 peptide and APP amyloid-beta protein 40. Interacts with ADAM7 in sperm; the interaction increases following capacitation. Post-translationally, the ectodomain C-terminal part of the imBRI2 is processed by furin producing a secreted Bri23 peptide and a mature BRI2, membrane form (mBRI2). The remaining part of the ectodomain of mBRI2 containing the BRICHOS domain is cleaved by ADAM10 and is secreted (BRI2C, soluble form). The membrane-bound N-terminal fragment (BRI2C, membrane form) is further proteolytically processed by SPPL2A and SPPL2B through regulated intramembrane proteolysis producing a secreted C-peptide and a BRI2 intracellular domain (BRI2 ICD) released in the cytosol. Shedding by ADAM10 facilitates intramembrane cleavage but is not absolutely required for BRI2 ICD generation. Glycosylation at Asn-170 is important for cell surface localization, but doesn't affect furin- and ADAM10-induced proteolytic processing. In terms of tissue distribution, expressed in the brain, testis, testicular sperm, epididymis and mature epididymal sperm (at protein level).

The protein resides in the golgi apparatus membrane. Its subcellular location is the cell membrane. It localises to the endosome membrane. It is found in the secreted. Its function is as follows. Plays a regulatory role in the processing of the amyloid-beta A4 precursor protein (APP) and acts as an inhibitor of the amyloid-beta peptide aggregation and fibrils deposition. Plays a role in the induction of neurite outgrowth. Functions as a protease inhibitor by blocking access of secretases to APP cleavage sites. In terms of biological role, mature BRI2 (mBRI2) functions as a modulator of the amyloid-beta A4 precursor protein (APP) processing leading to a strong reduction in the secretion of secretase-processed amyloid-beta protein 40 and amyloid-beta protein 42. Bri23 peptide prevents aggregation of APP amyloid-beta protein 42 into toxic oligomers. In Mus musculus (Mouse), this protein is Integral membrane protein 2B (Itm2b).